The following is a 376-amino-acid chain: Cobalt-precorrin-5B C(1)-methyltransferase (376 aa).

Residues 353-376 (KGRTTSTPSHQPAPSSFGDRNRRT) are disordered. Positions 355-366 (RTTSTPSHQPAP) are enriched in polar residues.

This sequence belongs to the CbiD family.

The catalysed reaction is Co-precorrin-5B + S-adenosyl-L-methionine = Co-precorrin-6A + S-adenosyl-L-homocysteine. It functions in the pathway cofactor biosynthesis; adenosylcobalamin biosynthesis; cob(II)yrinate a,c-diamide from sirohydrochlorin (anaerobic route): step 6/10. Catalyzes the methylation of C-1 in cobalt-precorrin-5B to form cobalt-precorrin-6A. The protein is Cobalt-precorrin-5B C(1)-methyltransferase of Agrobacterium fabrum (strain C58 / ATCC 33970) (Agrobacterium tumefaciens (strain C58)).